The sequence spans 1733 residues: Polyketide synthase Pks13 (1733 aa).

The region spanning 17–95 is the Carrier 1 domain; the sequence is ELTVPEMRQW…SLATRIIEGE (79 aa). Ser-55 carries the O-(pantetheine 4'-phosphoryl)serine modification. Residues 116–541 enclose the Ketosynthase family 3 (KS3) domain; that stretch reads RVDIAIVGLS…GANAHVVVRE (426 aa). Cys-287 acts as the Acyl-thioester intermediate; for beta-ketoacyl synthase activity in catalysis. Residues His-423 and His-463 each act as for beta-ketoacyl synthase activity in the active site. Positions 548–560 are enriched in basic and acidic residues; sequence VEKEPEPEPEPKA. The interval 548 to 567 is disordered; sequence VEKEPEPEPEPKAAAEPAEA. The acyltransferase stretch occupies residues 713–1034; sequence VWVLAGFGAQ…MVSTMAQLYV (322 aa). The Acyl-ester intermediate; for acyltransferase activity role is filled by Ser-801. Residues 1232–1309 form the Carrier 2 domain; sequence ETIAERLGLI…KLIEYAVEHR (78 aa). Ser-1266 is modified (O-(pantetheine 4'-phosphoryl)serine). The tract at residues 1344–1368 is disordered; it reads PVDSEAGVALPSPQNGEQPNPTGPA. Positions 1470 to 1563 are thioesterase-like; it reads PVFVFHPAGG…RFVGLIDAVR (94 aa). Residue Ser-1533 is the For thioesterase-like activity of the active site.

Post-translationally, 4'-phosphopantetheine is transferred from CoA to specific serines of apo-Pks13 by PptT.

It functions in the pathway lipid metabolism; mycolic acid biosynthesis. With respect to regulation, the presence of FadD32 is necessary for the transfer of the acyl chain from the AMP carrier onto Pks13. Its function is as follows. Involved in the biosynthesis of mycolic acids. Forms, with FadD32, the initiation module of the mycolic condensation system. Synthesizes, in coupled reaction with FadD32, the biosynthetic precursors of mycolic acids, alpha-alkyl beta-ketoacids, via the condensation of two long chain fatty acid derivatives, a very long meromycoloyl-AMP and a shorter 2-carboxyacyl-CoA. The acyl chain of the acyl-AMP produced by FadD32 is specifically transferred onto the N-terminal ACP domain of Pks13, and then transferred onto the KS domain. The extender unit carboxyacyl-CoA is specifically loaded onto the AT domain, which catalyzes the covalent attachment of the carboxyacyl chain to its active site, and its subsequent transfer onto the P-pant arm of the C-terminal ACP domain. The KS domain catalyzes the condensation between the two loaded fatty acyl chains to produce an alpha-alkyl beta-ketothioester linked to the C-ACP domain. Then, the thioesterase-like domain acts as a transacylase and is responsible for both the release and the transfer of the alpha-alkyl beta-ketoacyl chain onto a polyol acceptor molecule, particularly trehalose, leading to the formation of the trehalose monomycolate precursor. The chain is Polyketide synthase Pks13 from Mycobacterium tuberculosis (strain ATCC 25618 / H37Rv).